Here is a 670-residue protein sequence, read N- to C-terminus: Leucine-rich repeat-containing protein 45 (670 aa).

LRR repeat units follow at residues 58–80, 87–107, 115–136, 145–166, 173–194, and 201–212; these read TLCT…LLLR, VLRF…EALG, SIQS…FATF, ALQR…ELAL, TLQQ…ALMN, and TLWRLDLAGNNI. Residues 252–645 adopt a coiled-coil conformation; it reads REEKSKQFLD…IARIRDEEAQ (394 aa). The residue at position 661 (Ser661) is a Phosphoserine; by NEK2.

In terms of assembly, homomer. Interacts with CROCC/rootletin and CEP250. Interacts with CEP44. Interacts with CCDC102B (via N-terminus). Post-translationally, phosphorylated by NEK2 during misosis, phosphorylation reduces centrosomal localization which subsequently leads to centrosome separation.

Its subcellular location is the cytoplasm. The protein localises to the cytoskeleton. The protein resides in the microtubule organizing center. It localises to the centrosome. Functionally, component of the proteinaceous fiber-like linker between two centrioles, required for centrosome cohesion. The protein is Leucine-rich repeat-containing protein 45 (LRRC45) of Homo sapiens (Human).